Reading from the N-terminus, the 445-residue chain is tRNA-2-methylthio-N(6)-dimethylallyladenosine synthase (445 aa).

One can recognise an MTTase N-terminal domain in the interval 3–124 (KKLYIKTYGC…LPELISKVVR (122 aa)). [4Fe-4S] cluster-binding residues include cysteine 12, cysteine 48, cysteine 87, cysteine 162, cysteine 166, and cysteine 169. Residues 148-380 (YPQGASSFIS…QQELATQQLA (233 aa)) enclose the Radical SAM core domain. The TRAM domain maps to 383–445 (QSCVGSTMRV…ALNSLTGEIL (63 aa)).

Belongs to the methylthiotransferase family. MiaB subfamily. Monomer. The cofactor is [4Fe-4S] cluster.

Its subcellular location is the cytoplasm. It carries out the reaction N(6)-dimethylallyladenosine(37) in tRNA + (sulfur carrier)-SH + AH2 + 2 S-adenosyl-L-methionine = 2-methylsulfanyl-N(6)-dimethylallyladenosine(37) in tRNA + (sulfur carrier)-H + 5'-deoxyadenosine + L-methionine + A + S-adenosyl-L-homocysteine + 2 H(+). Its function is as follows. Catalyzes the methylthiolation of N6-(dimethylallyl)adenosine (i(6)A), leading to the formation of 2-methylthio-N6-(dimethylallyl)adenosine (ms(2)i(6)A) at position 37 in tRNAs that read codons beginning with uridine. This chain is tRNA-2-methylthio-N(6)-dimethylallyladenosine synthase, found in Rickettsia prowazekii (strain Madrid E).